Consider the following 567-residue polypeptide: Zinc finger protein 143 (567 aa).

C2H2-type zinc fingers lie at residues 230–254, 260–284, 290–314, 320–344, 350–374, 380–404, and 410–433; these read FRCD…ERSH, YQCD…VRTH, YRCS…VRTH, FKCP…IRTH, YYCS…VRIH, YVCT…HVVH, and YNCN…RTAH. Residues 506-520 show a composition bias toward polar residues; the sequence is SATESGPQHSHNLGG. Residues 506–525 are disordered; the sequence is SATESGPQHSHNLGGSESRP.

This sequence belongs to the GLI C2H2-type zinc-finger protein family.

It is found in the nucleus. Functionally, transcriptional activator. Activates the gene for selenocysteine tRNA (tRNAsec). Binds to the activator element (AE) motif of the selenocysteine tRNA gene promoter. The protein is Zinc finger protein 143 (znf143) of Xenopus tropicalis (Western clawed frog).